The following is a 430-amino-acid chain: Enolase (430 aa).

Glutamine 167 contacts (2R)-2-phosphoglycerate. Glutamate 209 functions as the Proton donor in the catalytic mechanism. Mg(2+)-binding residues include aspartate 245, glutamate 286, and aspartate 313. The (2R)-2-phosphoglycerate site is built by lysine 338, arginine 367, serine 368, and lysine 389. Lysine 338 serves as the catalytic Proton acceptor.

This sequence belongs to the enolase family. Requires Mg(2+) as cofactor.

It is found in the cytoplasm. It localises to the secreted. Its subcellular location is the cell surface. The enzyme catalyses (2R)-2-phosphoglycerate = phosphoenolpyruvate + H2O. The protein operates within carbohydrate degradation; glycolysis; pyruvate from D-glyceraldehyde 3-phosphate: step 4/5. Its function is as follows. Catalyzes the reversible conversion of 2-phosphoglycerate (2-PG) into phosphoenolpyruvate (PEP). It is essential for the degradation of carbohydrates via glycolysis. The protein is Enolase of Synechococcus sp. (strain CC9605).